A 294-amino-acid polypeptide reads, in one-letter code: ATP phosphoribosyltransferase (294 aa).

Belongs to the ATP phosphoribosyltransferase family. Long subfamily. Mg(2+) serves as cofactor.

The protein localises to the cytoplasm. It catalyses the reaction 1-(5-phospho-beta-D-ribosyl)-ATP + diphosphate = 5-phospho-alpha-D-ribose 1-diphosphate + ATP. The protein operates within amino-acid biosynthesis; L-histidine biosynthesis; L-histidine from 5-phospho-alpha-D-ribose 1-diphosphate: step 1/9. Feedback inhibited by histidine. In terms of biological role, catalyzes the condensation of ATP and 5-phosphoribose 1-diphosphate to form N'-(5'-phosphoribosyl)-ATP (PR-ATP). Has a crucial role in the pathway because the rate of histidine biosynthesis seems to be controlled primarily by regulation of HisG enzymatic activity. The protein is ATP phosphoribosyltransferase of Chlorobaculum parvum (strain DSM 263 / NCIMB 8327) (Chlorobium vibrioforme subsp. thiosulfatophilum).